The following is a 155-amino-acid chain: Endoribonuclease YbeY (155 aa).

3 residues coordinate Zn(2+): H114, H118, and H124.

The protein belongs to the endoribonuclease YbeY family. Zn(2+) serves as cofactor.

The protein resides in the cytoplasm. Functionally, single strand-specific metallo-endoribonuclease involved in late-stage 70S ribosome quality control and in maturation of the 3' terminus of the 16S rRNA. The polypeptide is Endoribonuclease YbeY (Erwinia tasmaniensis (strain DSM 17950 / CFBP 7177 / CIP 109463 / NCPPB 4357 / Et1/99)).